The following is a 22-amino-acid chain: MEFVAKLFKFFKDLLGKFLGNN.

This sequence belongs to the phenol-soluble modulin alpha peptides family.

Its function is as follows. Peptide which can recruit, activate and subsequently lyse human neutrophils, thus eliminating the main cellular defense against infection. The polypeptide is Phenol-soluble modulin alpha 3 peptide (psmA3) (Staphylococcus aureus (strain Mu3 / ATCC 700698)).